Here is a 408-residue protein sequence, read N- to C-terminus: Imidazolonepropionase (408 aa).

Residues His-73 and His-75 each contribute to the Fe(3+) site. Zn(2+)-binding residues include His-73 and His-75. Positions 82, 145, and 178 each coordinate 4-imidazolone-5-propanoate. Tyr-145 contacts N-formimidoyl-L-glutamate. Fe(3+) is bound at residue His-243. His-243 is a binding site for Zn(2+). Gln-246 is a binding site for 4-imidazolone-5-propanoate. Asp-318 contributes to the Fe(3+) binding site. Asp-318 serves as a coordination point for Zn(2+). 2 residues coordinate N-formimidoyl-L-glutamate: Asn-320 and Gly-322. Position 323 (Ser-323) interacts with 4-imidazolone-5-propanoate.

The protein belongs to the metallo-dependent hydrolases superfamily. HutI family. The cofactor is Zn(2+). Fe(3+) serves as cofactor.

Its subcellular location is the cytoplasm. It catalyses the reaction 4-imidazolone-5-propanoate + H2O = N-formimidoyl-L-glutamate. It participates in amino-acid degradation; L-histidine degradation into L-glutamate; N-formimidoyl-L-glutamate from L-histidine: step 3/3. In terms of biological role, catalyzes the hydrolytic cleavage of the carbon-nitrogen bond in imidazolone-5-propanoate to yield N-formimidoyl-L-glutamate. It is the third step in the universal histidine degradation pathway. The polypeptide is Imidazolonepropionase (Shewanella loihica (strain ATCC BAA-1088 / PV-4)).